A 927-amino-acid chain; its full sequence is Protein LONGIFOLIA 1 (927 aa).

4 disordered regions span residues 41–198 (TGDE…EGRR), 210–257 (YDER…GHRR), 460–588 (AQKV…SDSN), and 605–626 (YERN…DLGM). Residues 86 to 114 (SSESSSRLSFSSSPCSSSFSSADISTTAS) are compositionally biased toward low complexity. Polar residues predominate over residues 115 to 125 (QFEQPGLSNGE). Over residues 146–165 (DIRELVRSSIHKETRTRDEE) the composition is skewed to basic and acidic residues. Residues 182 to 193 (KESSPSRNSNEW) show a composition bias toward polar residues. Residues 210–226 (YDERETRKTGAKLKETP) show a composition bias toward basic and acidic residues. Low complexity predominate over residues 232 to 245 (SRSNSFRSARSSCS). Composition is skewed to polar residues over residues 483–500 (QTES…QSKS) and 538–553 (NKNQ…TESA). 2 stretches are compositionally biased toward basic and acidic residues: residues 569 to 584 (SEDR…RSLR) and 605 to 616 (YERNSDITEQHT).

In terms of assembly, interacts (via C-terminus) with TON1A and TON1B. Expressed in roots, petioles, leaf blades and floral organs.

It is found in the nucleus. In terms of biological role, in association with LNG2, regulates leaf morphology by promoting longitudinal polar cell elongation independently of ROT3. The polypeptide is Protein LONGIFOLIA 1 (LNG1) (Arabidopsis thaliana (Mouse-ear cress)).